Here is a 264-residue protein sequence, read N- to C-terminus: UPF0162 protein PM0557 (264 aa).

It belongs to the UPF0162 family.

The polypeptide is UPF0162 protein PM0557 (Pasteurella multocida (strain Pm70)).